Consider the following 911-residue polypeptide: Nitrate reductase [NADH], clone PBNBR1405 (911 aa).

Residues 1-68 (MATSVDNRHY…RFDSSDDEDE (68 aa)) are disordered. Basic and acidic residues predominate over residues 49-62 (KSVDKTTKEDRFDS). A Mo-molybdopterin-binding site is contributed by Cys-191. Residues 539-614 (SKMYSMSEVR…LEDYRIGELI (76 aa)) form the Cytochrome b5 heme-binding domain. Residues His-574 and His-597 each contribute to the heme site. One can recognise an FAD-binding FR-type domain in the interval 654-766 (REKVPVKLIE…KGPLGHIEYQ (113 aa)). FAD-binding positions include 706-709 (RAYT), 723-727 (VIKVY), Phe-728, Phe-735, 740-742 (LMS), and Thr-793.

It belongs to the nitrate reductase family. As to quaternary structure, homodimer. The cofactor is FAD. Heme serves as cofactor. It depends on Mo-molybdopterin as a cofactor.

The enzyme catalyses nitrite + NAD(+) + H2O = nitrate + NADH + H(+). In terms of biological role, nitrate reductase is a key enzyme involved in the first step of nitrate assimilation in plants, fungi and bacteria. This Brassica napus (Rape) protein is Nitrate reductase [NADH], clone PBNBR1405 (NIA1).